A 141-amino-acid chain; its full sequence is Large ribosomal subunit protein uL11 (141 aa).

Belongs to the universal ribosomal protein uL11 family. In terms of assembly, part of the ribosomal stalk of the 50S ribosomal subunit. Interacts with L10 and the large rRNA to form the base of the stalk. L10 forms an elongated spine to which L12 dimers bind in a sequential fashion forming a multimeric L10(L12)X complex. In terms of processing, one or more lysine residues are methylated.

Its function is as follows. Forms part of the ribosomal stalk which helps the ribosome interact with GTP-bound translation factors. The sequence is that of Large ribosomal subunit protein uL11 from Limosilactobacillus fermentum (strain NBRC 3956 / LMG 18251) (Lactobacillus fermentum).